Consider the following 271-residue polypeptide: NAD kinase (271 aa).

Residue aspartate 52 is the Proton acceptor of the active site. Residues aspartate 52–glycine 53, asparagine 129–glutamate 130, arginine 155, aspartate 157, and alanine 192 contribute to the NAD(+) site.

It belongs to the NAD kinase family. A divalent metal cation is required as a cofactor.

It localises to the cytoplasm. The catalysed reaction is NAD(+) + ATP = ADP + NADP(+) + H(+). In terms of biological role, involved in the regulation of the intracellular balance of NAD and NADP, and is a key enzyme in the biosynthesis of NADP. Catalyzes specifically the phosphorylation on 2'-hydroxyl of the adenosine moiety of NAD to yield NADP. The protein is NAD kinase of Geobacillus stearothermophilus (Bacillus stearothermophilus).